A 277-amino-acid polypeptide reads, in one-letter code: Large ribosomal subunit protein uL2 (277 aa).

Residues 216 to 277 are disordered; sequence RRPHNRGVAM…IIRRRKVGKG (62 aa).

It belongs to the universal ribosomal protein uL2 family. In terms of assembly, part of the 50S ribosomal subunit. Forms a bridge to the 30S subunit in the 70S ribosome.

Functionally, one of the primary rRNA binding proteins. Required for association of the 30S and 50S subunits to form the 70S ribosome, for tRNA binding and peptide bond formation. It has been suggested to have peptidyltransferase activity; this is somewhat controversial. Makes several contacts with the 16S rRNA in the 70S ribosome. This chain is Large ribosomal subunit protein uL2, found in Acidiphilium cryptum (strain JF-5).